We begin with the raw amino-acid sequence, 133 residues long: uncharacterized protein (133 aa).

Residues 1–23 (MSRKIIPALTIFFGPILILTAIT) form the signal peptide. The disordered stretch occupies residues 82 to 133 (ESIKNQNSLNKEKQQQQQQQQQQQQQQQQQQQQQQKPNTPPTPLTTPSTPKK). The span at 96–118 (QQQQQQQQQQQQQQQQQQQQQKP) shows a compositional bias: low complexity.

The protein localises to the secreted. This is an uncharacterized protein from Dictyostelium discoideum (Social amoeba).